The primary structure comprises 355 residues: Protein AMBP (355 aa).

2 residues coordinate 3-hydroxy-L-kynurenine: Cys55 and Lys138. Cys92 and Cys189 are disulfide-bonded. Asn145 carries an N-linked (GlcNAc...) asparagine glycan. Position 150 (Lys150) interacts with 3-hydroxy-L-kynurenine. 2 N-linked (GlcNAc...) asparagine glycosylation sites follow: Asn231 and Asn255. 6 disulfides stabilise this stretch: Cys236–Cys286, Cys245–Cys269, Cys261–Cys282, Cys292–Cys342, Cys301–Cys325, and Cys317–Cys338. 2 consecutive BPTI/Kunitz inhibitor domains span residues 236–286 (CKAA…LQRC) and 292–342 (CRLP…QEYC).

It in the N-terminal section; belongs to the calycin superfamily. Lipocalin family. I-alpha-I plasma protease inhibitors are assembled from one or two heavy chains (H1, H2 or H3) and one light chain, bikunin. Inter-alpha-inhibitor (I-alpha-I) is composed of H1, H2 and bikunin, inter-alpha-like inhibitor (I-alpha-LI) of H2 and bikunin, and pre-alpha-inhibitor (P-alpha-I) of H3 and bikunin. In terms of processing, the precursor is proteolytically processed into two separately functioning proteins. Post-translationally, 3-hydroxykynurenine, an oxidized tryptophan metabolite that is common in biological fluids, reacts with Cys-55, Lys-138, and Lys-150 to form heterogeneous polycyclic chromophores including hydroxanthommatin. The reaction by alpha-1-microglobulin is autocatalytic. The chromophore can react with accessible cysteines forming non-reducible thioether cross-links with other molecules of alpha-1-microglobulin or with other proteins. As to expression, expressed by the liver and secreted in plasma.

It is found in the secreted. In Pleuronectes platessa (European plaice), this protein is Protein AMBP.